The sequence spans 131 residues: Small ribosomal subunit protein eS17 (131 aa).

This sequence belongs to the eukaryotic ribosomal protein eS17 family.

The sequence is that of Small ribosomal subunit protein eS17 (RpS17) from Drosophila melanogaster (Fruit fly).